The primary structure comprises 214 residues: MASVPCSFKLSAHRRSSSKLDGNNKQCSSLVERLRDKTKSQVPKSITCINRLEISRIAPLHATMNSPKGFGPPPKKTKKSKKPKPGNQSDEDDDDEDEDDDDEEDERERGVIPEIVTNRMISRMGFTVGLPLFIGLLFFPFFYYLKVGLKVDVPTWVPFIVSFVFFGTALAGVSYGIVSSSWDPLREGSLLGWNEAKKNWPVFWQSFWNSSDKR.

2 disordered regions span residues 1–26 (MASV…NNKQ) and 62–111 (ATMN…ERGV). A chloroplast-targeting transit peptide spans 1–35 (MASVPCSFKLSAHRRSSSKLDGNNKQCSSLVERLR). Residues 36 to 124 (DKTKSQVPKS…IVTNRMISRM (89 aa)) lie on the Stromal side of the membrane. A compositionally biased stretch (basic residues) spans 75–84 (KKTKKSKKPK). Over residues 89–106 (SDEDDDDEDEDDDDEEDE) the composition is skewed to acidic residues. A helical membrane pass occupies residues 125 to 145 (GFTVGLPLFIGLLFFPFFYYL). Residues 146-152 (KVGLKVD) are Lumenal, thylakoid-facing. Residues 153–173 (VPTWVPFIVSFVFFGTALAGV) form a helical membrane-spanning segment. The Stromal segment spans residues 174 to 214 (SYGIVSSSWDPLREGSLLGWNEAKKNWPVFWQSFWNSSDKR).

Interacts with the PSII subunits psbA, psbB, psbC, psbD, psbH and psbI, but not with psbE, psbF or psbO. Interacts with the PSII assembly factors HCF136, LPA1, LPA2 and ALB3.

The protein localises to the plastid. Its subcellular location is the chloroplast thylakoid membrane. Its function is as follows. Involved in early steps in photosystem II (PSII) biogenesis and in maturation and stability of newly synthesized psbA protein. In Arabidopsis thaliana (Mouse-ear cress), this protein is Protein PAM68, chloroplastic (PAM68).